We begin with the raw amino-acid sequence, 193 residues long: T-cell receptor-associated transmembrane adapter 1 (193 aa).

The Extracellular portion of the chain corresponds to 1–10 (MSGNAECHFS). The helical; Signal-anchor for type III membrane protein transmembrane segment at 11 to 31 (IWAILAFLGLALTISLIFNIF) threads the bilayer. Residues 32 to 193 (HCVEKQRQEK…LHSLDYDLAQ (162 aa)) lie on the Cytoplasmic side of the membrane. S46 bears the Phosphoserine mark. Residue Y80 is modified to Phosphotyrosine. An interaction with PIK3R1 region spans residues 80 to 83 (YEQM). Residues 116 to 166 (NEGKRRKPRKQKSHLSDKDEEGQMHAKDISLSKTTLVDSYPPESEAIEENI) form a disordered region. Over residues 119–128 (KRRKPRKQKS) the composition is skewed to basic residues. Residues 129–145 (HLSDKDEEGQMHAKDIS) show a composition bias toward basic and acidic residues.

Homodimer; disulfide-linked. Interacts with CD3Z. When phosphorylated, interacts with PIK3R1. Post-translationally, phosphorylated on tyrosines upon TCR activation.

It is found in the cell membrane. In terms of biological role, stabilizes the TCR (T-cell antigen receptor)/CD3 complex at the surface of T-cells. This Bos taurus (Bovine) protein is T-cell receptor-associated transmembrane adapter 1 (TRAT1).